The sequence spans 185 residues: Ribosome-recycling factor (185 aa).

It belongs to the RRF family.

Its subcellular location is the cytoplasm. Functionally, responsible for the release of ribosomes from messenger RNA at the termination of protein biosynthesis. May increase the efficiency of translation by recycling ribosomes from one round of translation to another. In Saccharophagus degradans (strain 2-40 / ATCC 43961 / DSM 17024), this protein is Ribosome-recycling factor.